A 434-amino-acid chain; its full sequence is Pyrichalasin H cluster regulator BC2 (434 aa).

Disordered regions lie at residues 297 to 321 (GSSPSGTPESELTSPHKRATTCSPL) and 362 to 383 (HPGHEDHQQQQEEVKQHDRLSH). Positions 298-309 (SSPSGTPESELT) are enriched in polar residues. Residues 362–380 (HPGHEDHQQQQEEVKQHDR) show a composition bias toward basic and acidic residues.

It is found in the nucleus. Its function is as follows. Transcription factor probably involved in regulation of gene cluster that mediates the biosynthesis of a tyrosine-derived cytochalasan acting as a fungal signal recognized by resistant rice plants and leads to avirulence in Pi33 resistant rice cultivars. This Pyricularia oryzae (strain 70-15 / ATCC MYA-4617 / FGSC 8958) (Rice blast fungus) protein is Pyrichalasin H cluster regulator BC2.